Reading from the N-terminus, the 851-residue chain is ATP-dependent DNA helicase DDX31 (851 aa).

The interval 1-196 (MAPDLASQRH…STSDRNQEER (196 aa)) is disordered. Residues 230–259 (AAFHELGLHPHLISTINTVLKMSSMTSVQK) carry the Q motif motif. The region spanning 262-443 (IPVLLEGRDA…DISLHDPVSI (182 aa)) is the Helicase ATP-binding domain. An ATP-binding site is contributed by 275 to 282 (SQTGSGKT). Residues 388–391 (DEAD) carry the DEAD box motif. The region spanning 480–659 (SLKQHVTVVP…VSEIKMEDIL (180 aa)) is the Helicase C-terminal domain. Disordered regions lie at residues 762–784 (KKRKAHVKRPDLHKKTQSKHSLA) and 804–851 (KQNA…SQKV). Omega-N-methylarginine is present on arginine 828. The span at 841-851 (VQRDSKTSQKV) shows a compositional bias: basic and acidic residues.

Belongs to the DEAD box helicase family. DDX31/DBP7 subfamily. In terms of assembly, interacts with NPM1; this interaction prevents interaction between NPM1 and HDM2. As to expression, weakly or undetectably expressed in normal organs. Up-regulated in renal cell carcinoma.

The protein resides in the nucleus. The protein localises to the nucleolus. The catalysed reaction is ATP + H2O = ADP + phosphate + H(+). Its function is as follows. May have DNA helicase activity and RNA helicase activity. Probably have ssDNA and RNA dependent ATPase activity. Plays a role in ribosome biogenesis and TP53/p53 regulation through its interaction with NPM1. The sequence is that of ATP-dependent DNA helicase DDX31 from Homo sapiens (Human).